Here is a 1220-residue protein sequence, read N- to C-terminus: DNA-directed RNA polymerase subunit beta' (1220 aa).

Zn(2+)-binding residues include cysteine 61, cysteine 63, cysteine 76, and cysteine 79. Mg(2+) is bound by residues aspartate 450, aspartate 452, and aspartate 454. The segment at 1197–1220 (QPEVEQEPTPDIPKLDDVAKSFEE) is disordered. Residues 1209–1220 (PKLDDVAKSFEE) show a composition bias toward basic and acidic residues.

This sequence belongs to the RNA polymerase beta' chain family. In terms of assembly, the RNAP catalytic core consists of 2 alpha, 1 beta, 1 beta' and 1 omega subunit. When a sigma factor is associated with the core the holoenzyme is formed, which can initiate transcription. It depends on Mg(2+) as a cofactor. Zn(2+) serves as cofactor.

It carries out the reaction RNA(n) + a ribonucleoside 5'-triphosphate = RNA(n+1) + diphosphate. Its function is as follows. DNA-dependent RNA polymerase catalyzes the transcription of DNA into RNA using the four ribonucleoside triphosphates as substrates. The polypeptide is DNA-directed RNA polymerase subunit beta' (Leuconostoc citreum (strain KM20)).